The primary structure comprises 242 residues: Small ribosomal subunit protein uS2 (242 aa).

It belongs to the universal ribosomal protein uS2 family.

The sequence is that of Small ribosomal subunit protein uS2 from Vibrio parahaemolyticus serotype O3:K6 (strain RIMD 2210633).